Here is a 309-residue protein sequence, read N- to C-terminus: Probable HTH-type transcriptional regulator LtrA (309 aa).

The HTH lysR-type domain maps to 1-61 (MNLNLLPDLA…QRTTRKLRLS (61 aa)). Positions 21–40 (FSAVARQNGITPSAVSRSVS) form a DNA-binding region, H-T-H motif.

This sequence belongs to the LysR transcriptional regulatory family.

The polypeptide is Probable HTH-type transcriptional regulator LtrA (ltrA) (Klebsiella pneumoniae).